A 113-amino-acid chain; its full sequence is Tubulin alpha chain (113 aa).

Residue Glu-52 coordinates GTP. Mg(2+) is bound at residue Glu-52.

It belongs to the tubulin family. Dimer of alpha and beta chains. A typical microtubule is a hollow water-filled tube with an outer diameter of 25 nm and an inner diameter of 15 nM. Alpha-beta heterodimers associate head-to-tail to form protofilaments running lengthwise along the microtubule wall with the beta-tubulin subunit facing the microtubule plus end conferring a structural polarity. Microtubules usually have 13 protofilaments but different protofilament numbers can be found in some organisms and specialized cells. The cofactor is Mg(2+).

It is found in the cytoplasm. Its subcellular location is the cytoskeleton. It carries out the reaction GTP + H2O = GDP + phosphate + H(+). In terms of biological role, tubulin is the major constituent of microtubules, a cylinder consisting of laterally associated linear protofilaments composed of alpha- and beta-tubulin heterodimers. Microtubules grow by the addition of GTP-tubulin dimers to the microtubule end, where a stabilizing cap forms. Below the cap, tubulin dimers are in GDP-bound state, owing to GTPase activity of alpha-tubulin. The protein is Tubulin alpha chain (TUBA) of Picea abies (Norway spruce).